The following is a 323-amino-acid chain: Isoeugenol synthase 1 (323 aa).

NADP(+)-binding positions include 14 to 17 (TGYL), 36 to 47 (VMPLKKNSDDSK), 88 to 90 (VPQ), 113 to 115 (SEF), Lys-135, and 155 to 157 (NSL). Lys-135 (proton donor/acceptor) is an active-site residue.

The protein belongs to the NmrA-type oxidoreductase family. In terms of tissue distribution, expressed in flowers, especially in corolla and tubes of petals, probably in both epidermal and mesophyll cell layers.

It catalyses the reaction (E)-isoeugenol + acetate + NADP(+) = (E)-coniferyl acetate + NADPH. It functions in the pathway aromatic compound metabolism; phenylpropanoid biosynthesis. Inhibited by zinc and copper ions. Repressed by 4-bromo-cinnamyl acetate. Functionally, involved in the biosynthesis of the floral volatile isoeugenol. Catalyzes the synthesis of the phenylpropene isoeugenol from coniferyl acetate. Phenylpropenes are the primary constituents of various essential plant oils. They are produced as antimicrobial and antianimal compounds, or as floral attractants of pollinators. Isoeugenol is a characteristic aromatic constituent of spices and a floral volatile compound. This is Isoeugenol synthase 1 from Petunia hybrida (Petunia).